Reading from the N-terminus, the 279-residue chain is MKYIGAHVSAAGGVENAPKNAGLIGATAFALFTKNQRQWKAKTLTEKSILGFKEACRTLGYGPGQILAHDSYLINLGHPDRESLEKSRAAFVDEMERCQQLGISLLNFHPGSHLGRIDIDPCLATIAASINLALEQTQDVTAVIENTAGQGTNLGFDFSQIRTIIDQVEDKTRVGVCLDTCHSFSAGYDLKSEHGFHQTFETFDRVIGFDYLKGMHLNDSTKAMGSRVDRHASLGQGTLGMAPFERIMKDTRFDNIPLILETPDPSLWASEIQQLRAFL.

His-69, His-109, Glu-145, Asp-179, His-182, His-216, Asp-229, His-231, and Glu-261 together coordinate Zn(2+).

The protein belongs to the AP endonuclease 2 family. Zn(2+) serves as cofactor.

The catalysed reaction is Endonucleolytic cleavage to 5'-phosphooligonucleotide end-products.. Endonuclease IV plays a role in DNA repair. It cleaves phosphodiester bonds at apurinic or apyrimidinic (AP) sites, generating a 3'-hydroxyl group and a 5'-terminal sugar phosphate. This is Probable endonuclease 4 from Desulforapulum autotrophicum (strain ATCC 43914 / DSM 3382 / VKM B-1955 / HRM2) (Desulfobacterium autotrophicum).